Here is a 389-residue protein sequence, read N- to C-terminus: Odorant receptor 85c (389 aa).

At 1 to 33 (MKFMKYAVFFYTSVGIEPYTIDSRSKKASLWSH) the chain is on the cytoplasmic side. A helical membrane pass occupies residues 34–54 (LLFWANVINLSVIVFGEILYL). Residues 55-66 (GVAYSDGKFIDA) are Extracellular-facing. A helical transmembrane segment spans residues 67–87 (VTVLSYIGFVIVGMSKMFFIW). At 88–130 (WKKTDLSDLVKELEHIYPNGKAEEEMYRLDRYLRSCSRISITY) the chain is on the cytoplasmic side. The chain crosses the membrane as a helical span at residues 131-151 (ALLYSVLIWTFNLFSIMQFLV). Residues 152–199 (YEKLLKIRVVGQTLPYLMYFPWNWHENWTYYVLLFCQNFAGHTSASGQ) lie on the Extracellular side of the membrane. Asn178 is a glycosylation site (N-linked (GlcNAc...) asparagine). Residues 200-220 (ISTDLLLCAVATQVVMHFDYL) traverse the membrane as a helical segment. Topologically, residues 221–259 (ARVVEKQVLDRDWSENSRFLAKTVQYHQRILRLMDVLND) are cytoplasmic. A helical membrane pass occupies residues 260–280 (IFGIPLLLNFMVSTFVICFVG). The Extracellular segment spans residues 281–290 (FQMTVGVPPD). Residues 291–311 (IMIKLFLFLFSSLSQVYLICH) traverse the membrane as a helical segment. The Cytoplasmic segment spans residues 312-359 (YGQLIADASSSLSISAYKQNWQNADIRYRRALVFFIARPQRTTYLKAT). Residues 360-380 (IFMNITRATMTDLLQVSYKFF) traverse the membrane as a helical segment. At 381 to 389 (ALLRTMYIK) the chain is on the extracellular side.

The protein belongs to the insect chemoreceptor superfamily. Heteromeric odorant receptor channel (TC 1.A.69) family. Or49a subfamily. Interacts with Orco. Complexes exist early in the endomembrane system in olfactory sensory neurons (OSNs), coupling these complexes to the conserved ciliary trafficking pathway.

The protein resides in the cell membrane. In terms of biological role, odorant receptor which mediates acceptance or avoidance behavior, depending on its substrates. The odorant receptor repertoire encodes a large collection of odor stimuli that vary widely in identity, intensity, and duration. May form a complex with Orco to form odorant-sensing units, providing sensitive and prolonged odorant signaling and calcium permeability. The polypeptide is Odorant receptor 85c (Or85c) (Drosophila melanogaster (Fruit fly)).